We begin with the raw amino-acid sequence, 237 residues long: Probable transcriptional regulatory protein Bpro_2928 (237 aa).

It belongs to the TACO1 family.

It is found in the cytoplasm. This chain is Probable transcriptional regulatory protein Bpro_2928, found in Polaromonas sp. (strain JS666 / ATCC BAA-500).